The sequence spans 198 residues: 7-methyl-GTP pyrophosphatase (198 aa).

D75 (proton acceptor) is an active-site residue.

This sequence belongs to the Maf family. YceF subfamily. It depends on a divalent metal cation as a cofactor.

It localises to the cytoplasm. It carries out the reaction N(7)-methyl-GTP + H2O = N(7)-methyl-GMP + diphosphate + H(+). In terms of biological role, nucleoside triphosphate pyrophosphatase that hydrolyzes 7-methyl-GTP (m(7)GTP). May have a dual role in cell division arrest and in preventing the incorporation of modified nucleotides into cellular nucleic acids. In Nitrosospira multiformis (strain ATCC 25196 / NCIMB 11849 / C 71), this protein is 7-methyl-GTP pyrophosphatase.